Reading from the N-terminus, the 786-residue chain is Probable aminopeptidase 1 (786 aa).

Residues Glu-103 and 235–239 (GAMEN) contribute to the substrate site. His-270 provides a ligand contact to Zn(2+). The active-site Proton acceptor is Glu-271. Residues His-274 and Glu-293 each coordinate Zn(2+).

Belongs to the peptidase M1 family. Zn(2+) is required as a cofactor.

Its subcellular location is the cytoplasm. In Sulfurisphaera tokodaii (strain DSM 16993 / JCM 10545 / NBRC 100140 / 7) (Sulfolobus tokodaii), this protein is Probable aminopeptidase 1 (ape1).